A 142-amino-acid chain; its full sequence is Large ribosomal subunit protein uL13 (142 aa).

This sequence belongs to the universal ribosomal protein uL13 family. As to quaternary structure, part of the 50S ribosomal subunit.

Functionally, this protein is one of the early assembly proteins of the 50S ribosomal subunit, although it is not seen to bind rRNA by itself. It is important during the early stages of 50S assembly. The protein is Large ribosomal subunit protein uL13 of Pseudomonas syringae pv. syringae (strain B728a).